The chain runs to 132 residues: UPF0299 membrane protein YohJ (132 aa).

Helical transmembrane passes span 7-27 (IIWQ…AGIF), 31-51 (LLPV…VLLA), 63-83 (GCYV…VGVM), and 93-113 (FGPV…VVSW).

Belongs to the UPF0299 family.

The protein resides in the cell inner membrane. This is UPF0299 membrane protein YohJ from Shigella boydii serotype 4 (strain Sb227).